The primary structure comprises 121 residues: Protein CHLORORESPIRATORY REDUCTION 42, chloroplastic (121 aa).

Biogenesis factor component of the plastidial NDH subcomplex A.

The protein localises to the plastid. The protein resides in the chloroplast. Its subcellular location is the chloroplast stroma. Functionally, required for both formation and activity of the chloroplast NAD(P)H dehydrogenase (NDH) complex of the photosynthetic electron transport chain. Functions in assembly or stabilization of the NDH complex; probably involved, together with CRR1 and CRR6, in the incorporation of NdhJ, NdhM, NdhK and NdhI into the NDH subcomplex A assembly intermediate (NAI500) to produce the complex NAI400. This Arabidopsis thaliana (Mouse-ear cress) protein is Protein CHLORORESPIRATORY REDUCTION 42, chloroplastic.